The primary structure comprises 281 residues: Pantothenate synthetase (281 aa).

An ATP-binding site is contributed by 30-37; that stretch reads MGALHHGH. His37 (proton donor) is an active-site residue. Gln61 provides a ligand contact to (R)-pantoate. Residue Gln61 coordinates beta-alanine. ATP is bound at residue 147–150; that stretch reads GEKD. Gln153 is a (R)-pantoate binding site. ATP-binding positions include Leu176 and 184-187; that span reads SSSR.

The protein belongs to the pantothenate synthetase family. Homodimer.

The protein resides in the cytoplasm. The enzyme catalyses (R)-pantoate + beta-alanine + ATP = (R)-pantothenate + AMP + diphosphate + H(+). It participates in cofactor biosynthesis; (R)-pantothenate biosynthesis; (R)-pantothenate from (R)-pantoate and beta-alanine: step 1/1. Functionally, catalyzes the condensation of pantoate with beta-alanine in an ATP-dependent reaction via a pantoyl-adenylate intermediate. This is Pantothenate synthetase from Bartonella bacilliformis (strain ATCC 35685 / KC583 / Herrer 020/F12,63).